Here is a 60-residue protein sequence, read N- to C-terminus: MIFMILTKFEKARIIGARALQIAMGAPVIIDISPDIIDPIDIAMIEFENNVIPITIKRNQ.

The protein belongs to the archaeal Rpo6/eukaryotic RPB6 RNA polymerase subunit family. In terms of assembly, part of the RNA polymerase complex.

Its subcellular location is the cytoplasm. The enzyme catalyses RNA(n) + a ribonucleoside 5'-triphosphate = RNA(n+1) + diphosphate. In terms of biological role, DNA-dependent RNA polymerase (RNAP) catalyzes the transcription of DNA into RNA using the four ribonucleoside triphosphates as substrates. The sequence is that of DNA-directed RNA polymerase subunit Rpo6 from Picrophilus torridus (strain ATCC 700027 / DSM 9790 / JCM 10055 / NBRC 100828 / KAW 2/3).